The sequence spans 759 residues: MKKKIESYQGAAGGWGAVKSVANAVRKQMDIRQDVIAMFDMNKPEGFDCPGCAWPDPKHSASFDICENGAKAIAWEVTDKQVNASFFAENTVQSLLTWGDHELEAAGRLTQPLKYDDVSDCYKPLSWQQAFDEIGARLQSYSDPNQVEFYTSGRTSNEAAFLYQLFAREYRSNNFPDCSNMCHEPTSVGLAASIGVGKGTVLLEDFEKCDLVICIGHNPGTNHPRMLTSLRALVKRGAKMIAINPLQERGLERFTAPQNPFEMLTNSETQLASAYYNVRIGGDMALLKGMMRLLIERDDAASAAGRPSLLDDEFIQTHTVGFDELRRDVLNSEWKDIERISGLSQTQIAELADAYAAAERTIICYGMGITQHEHGTQNVQQLVNLLLMKGNIGKPGAGICPLRGHSNVQGDRTVGITEKPSAEFLDRLCERYGFTPPHAPGHAAIASMQAICTGQARALICMGGNFALAMPDREASAVPLTQLDLAVHVATKLNRSHLLTARHSYILPVLGRSEIDMQKSGAQAVTVEDSMSMIHASRGVLKPAGVMLKSECAVVAGIAQAALPQSVVAWEYLVEDYDRIRNDIEAVLPEFADYNQRIRHPGGFHLINAAAERRWMTSSGKANFITSKGLLEDPSSAFNSKLVMATVRSHDQYNTTIYGMDDRYRGVFGQRDVVFMSAKQAKICRVKNGERVNLIALTPDGKRSSRRMDRLKVVIYPMADRSLVTYFPESNHMLTLDNHDPLSGIPGYKSIPVELEPSN.

Residues cysteine 49 and cysteine 52 each contribute to the [4Fe-4S] cluster site.

It belongs to the prokaryotic molybdopterin-containing oxidoreductase family. [4Fe-4S] cluster serves as cofactor. The cofactor is Mo-bis(molybdopterin guanine dinucleotide).

Its function is as follows. Probably involved in acid resistance. In Escherichia coli O6:H1 (strain CFT073 / ATCC 700928 / UPEC), this protein is Protein YdeP (ydeP).